Here is a 171-residue protein sequence, read N- to C-terminus: N5-carboxyaminoimidazole ribonucleotide mutase (171 aa).

Substrate is bound by residues serine 13, aspartate 16, and arginine 43.

Belongs to the AIR carboxylase family. Class I subfamily.

It catalyses the reaction 5-carboxyamino-1-(5-phospho-D-ribosyl)imidazole + H(+) = 5-amino-1-(5-phospho-D-ribosyl)imidazole-4-carboxylate. It participates in purine metabolism; IMP biosynthesis via de novo pathway; 5-amino-1-(5-phospho-D-ribosyl)imidazole-4-carboxylate from 5-amino-1-(5-phospho-D-ribosyl)imidazole (N5-CAIR route): step 2/2. Catalyzes the conversion of N5-carboxyaminoimidazole ribonucleotide (N5-CAIR) to 4-carboxy-5-aminoimidazole ribonucleotide (CAIR). This Mycobacterium leprae (strain TN) protein is N5-carboxyaminoimidazole ribonucleotide mutase.